Consider the following 139-residue polypeptide: Cytochrome c-type biogenesis protein CcmE 2 (139 aa).

Residues 1-9 (MASLKKSRR) are Cytoplasmic-facing. Residues 10-30 (VRLILFSGVALVSATALIGYA) form a helical; Signal-anchor for type II membrane protein membrane-spanning segment. The Periplasmic portion of the chain corresponds to 31-139 (MRDGIQFFRT…ELAEMEALRD (109 aa)). The heme site is built by histidine 122 and tyrosine 126.

The protein belongs to the CcmE/CycJ family.

It is found in the cell inner membrane. In terms of biological role, heme chaperone required for the biogenesis of c-type cytochromes. Transiently binds heme delivered by CcmC and transfers the heme to apo-cytochromes in a process facilitated by CcmF and CcmH. The polypeptide is Cytochrome c-type biogenesis protein CcmE 2 (Ruegeria pomeroyi (strain ATCC 700808 / DSM 15171 / DSS-3) (Silicibacter pomeroyi)).